A 186-amino-acid chain; its full sequence is Interferon beta (186 aa).

The signal sequence occupies residues Met1 to Ser21. Tyr24 is subject to Phosphotyrosine. Cys52 and Cys161 are joined by a disulfide. N-linked (GlcNAc...) asparagine glycans are attached at residues Asn101 and Asn136.

The protein belongs to the alpha/beta interferon family. Monomer.

The protein resides in the secreted. Functionally, type I interferon cytokine that plays a key role in the innate immune response to infection, developing tumors and other inflammatory stimuli. Signals via binding to high-affinity (IFNAR2) and low-affinity (IFNAR1) heterodimeric receptor, activating the canonical Jak-STAT signaling pathway resulting in transcriptional activation or repression of interferon-regulated genes that encode the effectors of the interferon response, such as antiviral proteins, regulators of cell proliferation and differentiation, and immunoregulatory proteins. Signals mostly via binding to a IFNAR1-IFNAR2 heterodimeric receptor, but can also function with IFNAR1 alone and independently of Jak-STAT pathways. Elicits a wide variety of responses, including antiviral and antibacterial activities, and can regulate the development of B-cells, myelopoiesis and lipopolysaccharide (LPS)-inducible production of tumor necrosis factor. Plays a role in neuronal homeostasis by regulating dopamine turnover and protecting dopaminergic neurons: acts by promoting neuronal autophagy and alpha-synuclein clearance, thereby preventing dopaminergic neuron loss. IFNB1 is more potent than interferon-alpha (IFN-alpha) in inducing the apoptotic and antiproliferative pathways required for control of tumor cell growth. This is Interferon beta (IFNB1) from Equus caballus (Horse).